The chain runs to 134 residues: RxLR effector protein Avh238 (134 aa).

The signal sequence occupies residues 1-21; sequence MRGVFFVAVAVAIFARSSAEA. The RxLR-dEER motif lies at 44-68; the sequence is RFLRVADSEDDDLAAPADDGKTEER. Residues 50–72 are disordered; sequence DSEDDDLAAPADDGKTEERAPKF. Over residues 61 to 70 the composition is skewed to basic and acidic residues; sequence DDGKTEERAP.

The protein belongs to the RxLR effector family.

The protein localises to the secreted. It is found in the host cytoplasm. The protein resides in the host nucleus. Effector that, due to the lack of a histidine residue at position 79, is not able to induce cell death in tomato, tobacco, eggplant, potato, or in A.thaliana. The polypeptide is RxLR effector protein Avh238 (Phytophthora sojae (Soybean stem and root rot agent)).